The following is a 202-amino-acid chain: ATP-dependent Clp protease proteolytic subunit (202 aa).

Catalysis depends on S106, which acts as the Nucleophile. Residue H131 is part of the active site.

It belongs to the peptidase S14 family. Fourteen ClpP subunits assemble into 2 heptameric rings which stack back to back to give a disk-like structure with a central cavity, resembling the structure of eukaryotic proteasomes.

It is found in the cytoplasm. The catalysed reaction is Hydrolysis of proteins to small peptides in the presence of ATP and magnesium. alpha-casein is the usual test substrate. In the absence of ATP, only oligopeptides shorter than five residues are hydrolyzed (such as succinyl-Leu-Tyr-|-NHMec, and Leu-Tyr-Leu-|-Tyr-Trp, in which cleavage of the -Tyr-|-Leu- and -Tyr-|-Trp bonds also occurs).. Cleaves peptides in various proteins in a process that requires ATP hydrolysis. Has a chymotrypsin-like activity. Plays a major role in the degradation of misfolded proteins. The sequence is that of ATP-dependent Clp protease proteolytic subunit from Shewanella oneidensis (strain ATCC 700550 / JCM 31522 / CIP 106686 / LMG 19005 / NCIMB 14063 / MR-1).